We begin with the raw amino-acid sequence, 499 residues long: Phenylalanine--tRNA ligase alpha subunit (499 aa).

Residues threonine 333, glutamine 372 to glutamate 374, and tyrosine 412 each bind L-phenylalanine. Residue glutamate 414 coordinates Mg(2+). Position 436 (phenylalanine 436) interacts with L-phenylalanine.

This sequence belongs to the class-II aminoacyl-tRNA synthetase family. Phe-tRNA synthetase alpha subunit type 2 subfamily. In terms of assembly, tetramer of two alpha and two beta subunits. Requires Mg(2+) as cofactor.

Its subcellular location is the cytoplasm. The enzyme catalyses tRNA(Phe) + L-phenylalanine + ATP = L-phenylalanyl-tRNA(Phe) + AMP + diphosphate + H(+). The protein is Phenylalanine--tRNA ligase alpha subunit of Thermoplasma acidophilum (strain ATCC 25905 / DSM 1728 / JCM 9062 / NBRC 15155 / AMRC-C165).